Consider the following 681-residue polypeptide: DNA ligase (681 aa).

Residues 35–39 (DAEYD), 84–85 (SI), and Glu121 contribute to the NAD(+) site. Residue Lys123 is the N6-AMP-lysine intermediate of the active site. Positions 144, 180, 300, and 324 each coordinate NAD(+). Zn(2+) contacts are provided by Cys418, Cys421, Cys436, and Cys442. Residues 601–681 (AADGPASGKT…GLRRLLEQPA (81 aa)) enclose the BRCT domain.

This sequence belongs to the NAD-dependent DNA ligase family. LigA subfamily. The cofactor is Mg(2+). Requires Mn(2+) as cofactor.

It carries out the reaction NAD(+) + (deoxyribonucleotide)n-3'-hydroxyl + 5'-phospho-(deoxyribonucleotide)m = (deoxyribonucleotide)n+m + AMP + beta-nicotinamide D-nucleotide.. DNA ligase that catalyzes the formation of phosphodiester linkages between 5'-phosphoryl and 3'-hydroxyl groups in double-stranded DNA using NAD as a coenzyme and as the energy source for the reaction. It is essential for DNA replication and repair of damaged DNA. In Aromatoleum aromaticum (strain DSM 19018 / LMG 30748 / EbN1) (Azoarcus sp. (strain EbN1)), this protein is DNA ligase.